Consider the following 589-residue polypeptide: Outer envelope protein 64, chloroplastic (589 aa).

Residue methionine 1 is a topological domain, chloroplast intermembrane. A helical membrane pass occupies residues 2–22 (ASQAANLWVLLGLGLAGILML). At 23–141 (TKKLKKTVRE…NPAAPTRIPG (119 aa)) the chain is on the cytoplasmic side. Residues 142-162 (GACSGAAVAVATNAVDFALGI) form a helical membrane-spanning segment. The Chloroplast intermembrane segment spans residues 163-398 (DTVGGVRVPA…EITSEDYQNR (236 aa)). Residues 399–419 (ASSLLSIASISGCCQVTVPLG) traverse the membrane as a helical segment. Residues 420–589 (HHEKCPISVS…LSAERLRKFQ (170 aa)) are Cytoplasmic-facing. TPR repeat units lie at residues 474-507 (AEIA…SDNN), 508-541 (ATYY…DKKN), and 542-575 (VKAY…EPNN).

As to quaternary structure, part of the Toc complex and of the intermembrane space complex. Expressed in roots, cotyledons, leaves and flower buds.

Its subcellular location is the plastid. The protein localises to the chloroplast outer membrane. Chaperone receptor mediating Hsp90-dependent protein targeting to chloroplasts. Bi-functional preprotein receptor acting on both sides of the membrane. Not essential for an efficient import of pre-proteins into plastids. This chain is Outer envelope protein 64, chloroplastic (OEP64), found in Arabidopsis thaliana (Mouse-ear cress).